The chain runs to 461 residues: Elongation factor 1-alpha, oocyte form (461 aa).

Position 2 is a n,N,N-trimethylglycine (Gly-2). The region spanning 5–242 (KIHINIVVIG…DCIIPPQRPT (238 aa)) is the tr-type G domain. The interval 14–21 (GHVDSGKS) is G1. Residue 14-21 (GHVDSGKS) participates in GTP binding. The tract at residues 70–74 (GITID) is G2. The tract at residues 91 to 94 (DAPG) is G3. GTP-binding positions include 91–95 (DAPGH) and 153–156 (NKMD). Residues 153-156 (NKMD) form a G4 region. Positions 194–196 (SGW) are G5. 2 positions are modified to 5-glutamyl glycerylphosphorylethanolamine: Glu-301 and Glu-374.

The protein belongs to the TRAFAC class translation factor GTPase superfamily. Classic translation factor GTPase family. EF-Tu/EF-1A subfamily. Oocyte.

Its subcellular location is the cytoplasm. In terms of biological role, this protein promotes the GTP-dependent binding of aminoacyl-tRNA to the A-site of ribosomes during protein biosynthesis. In Xenopus laevis (African clawed frog), this protein is Elongation factor 1-alpha, oocyte form.